A 452-amino-acid polypeptide reads, in one-letter code: tRNA pseudouridine synthase Pus10 (452 aa).

A THUMP domain is found at E71–P200. D269 functions as the Nucleophile in the catalytic mechanism. Substrate-binding residues include Y335 and Y406.

This sequence belongs to the pseudouridine synthase Pus10 family.

It catalyses the reaction uridine(54) in tRNA = pseudouridine(54) in tRNA. It carries out the reaction uridine(55) in tRNA = pseudouridine(55) in tRNA. Responsible for synthesis of pseudouridine from uracil-54 and uracil-55 in the psi GC loop of transfer RNAs. The protein is tRNA pseudouridine synthase Pus10 of Methanothrix thermoacetophila (strain DSM 6194 / JCM 14653 / NBRC 101360 / PT) (Methanosaeta thermophila).